Consider the following 537-residue polypeptide: Cytochrome bd ubiquinol oxidase subunit 1 (537 aa).

Topologically, residues 1-24 are cytoplasmic; that stretch reads MISESVVDLSRLQFAMTALYHFLF. Residue His21 coordinates heme b. A helical membrane pass occupies residues 25–44; that stretch reads VPLTLGMTFLLAIMESVYVM. Residues 45 to 96 lie on the Periplasmic side of the membrane; the sequence is TGKQVYKDMVKFWGKLFGINFALGVTTGITMEFQFGTNWAYYSHYVGDIFGA. The helical transmembrane segment at 97–116 threads the bilayer; it reads PLAIEGLTAFFLESTFIGMF. Over 117 to 131 the chain is Cytoplasmic; sequence FFGWDRLSKIQHLAV. A helical transmembrane segment spans residues 132-151; sequence TWLVALGSNLSALWILVANG. Residues 152–189 are Periplasmic-facing; sequence WMQHPVGAEFNFETMRMELVDFGALLLNPVAQVKFVHT. His188 serves as a coordination point for heme b. A helical membrane pass occupies residues 190 to 209; it reads VASGYVTGAVFVLAISSYYL. The Cytoplasmic segment spans residues 210–221; the sequence is LKKRDLGFARRS. A helical transmembrane segment spans residues 222-241; that stretch reads FAIASAFGMASILSVIVLGD. Residues 242-394 lie on the Periplasmic side of the membrane; sequence ESGYEVGEVQ…VASMFWSFRA (153 aa). Residue Met395 coordinates heme b. A helical transmembrane segment spans residues 395-414; that stretch reads MVGAGFAMLILFVCAFWASA. At 415 to 472 the chain is on the cytoplasmic side; the sequence is RKNEESKPWLLKFALYSLPLPWIATQTGWFVAEHGRQPWTIGGVLPTHLSASSLSTGD. A helical membrane pass occupies residues 473 to 492; the sequence is LWGSLIALIAFYTLLLVVEM. The Periplasmic segment spans residues 493 to 537; the sequence is YLMIRFARLGPSSLHTGRYHFEQLEQHAVKHASPSQADPQQPVNA.

The protein belongs to the cytochrome ubiquinol oxidase subunit 1 family. In terms of assembly, heterodimer of subunits I and II. Heme b serves as cofactor. The cofactor is heme d cis-diol.

It is found in the cell inner membrane. The enzyme catalyses 2 a ubiquinol + O2(in) + 4 H(+)(in) = 2 a ubiquinone + 2 H2O(in) + 4 H(+)(out). Its function is as follows. May be involved in maintaining the low intracellular oxygen concentration required for nitrogen fixation. This chain is Cytochrome bd ubiquinol oxidase subunit 1 (cydA), found in Azotobacter vinelandii.